Consider the following 90-residue polypeptide: Small ribosomal subunit protein uS15c (90 aa).

Belongs to the universal ribosomal protein uS15 family. As to quaternary structure, part of the 30S ribosomal subunit.

It localises to the plastid. The protein resides in the chloroplast. The polypeptide is Small ribosomal subunit protein uS15c (rps15) (Manihot esculenta (Cassava)).